Reading from the N-terminus, the 316-residue chain is Olfactory receptor 12D3 (316 aa).

The Extracellular segment spans residues 1-23; sequence MENVTTMNEFLLLGLTGVQELQP. N3 carries N-linked (GlcNAc...) asparagine glycosylation. A helical membrane pass occupies residues 24–44; the sequence is FFFGIFLIIYLINLIGNGSIL. The Cytoplasmic portion of the chain corresponds to 45–52; it reads VMVVLEPQ. The chain crosses the membrane as a helical span at residues 53-73; that stretch reads LHSPMYFFLGNLSCLDISYSS. Residues 74 to 97 are Extracellular-facing; that stretch reads VTLPKLLVNLVCSRRAISFLGCIT. A disulfide bond links C95 and C187. The chain crosses the membrane as a helical span at residues 98 to 118; it reads QLHFFHFLGSTEAILLAIMAF. Residues 119–137 are Cytoplasmic-facing; the sequence is DRFVAICNPLRYTVIMNPQ. The chain crosses the membrane as a helical span at residues 138–158; the sequence is VCILLAAAAWLISFFYALMHS. Residues 159–195 are Extracellular-facing; sequence VMTAHLSFCGSQKLNHFFYDVKPLLELACSDTLLNQW. A helical transmembrane segment spans residues 196-215; it reads LLSIVTGSISMGAFFLTLLS. Residues 216-236 are Cytoplasmic-facing; the sequence is CFYVIGFLLFKNRSCRILHKA. A helical membrane pass occupies residues 237 to 257; the sequence is LSTCASHFMVVCLFYGPVGFT. At 258–270 the chain is on the extracellular side; the sequence is YIRPASATSMIQD. The helical transmembrane segment at 271–291 threads the bilayer; sequence RIMAIMYSAVTPVLNPLIYTL. Over 292-316 the chain is Cytoplasmic; the sequence is RNKEVMMALKKIFGRKLFKDWQQHH.

Belongs to the G-protein coupled receptor 1 family.

It is found in the cell membrane. Odorant receptor. This chain is Olfactory receptor 12D3 (OR12D3), found in Homo sapiens (Human).